A 301-amino-acid chain; its full sequence is Probable alpha-L-glutamate ligase (301 aa).

The region spanning 104–287 is the ATP-grasp domain; sequence LQFLSRKGID…IAGMIIEFIE (184 aa). ATP contacts are provided by residues Lys-141, 178–179, Asp-187, and 211–213; these read EF and RSN. Residues Asp-248, Glu-260, and Asn-262 each contribute to the Mg(2+) site. Mn(2+)-binding residues include Asp-248, Glu-260, and Asn-262.

The protein belongs to the RimK family. It depends on Mg(2+) as a cofactor. Mn(2+) is required as a cofactor.

The polypeptide is Probable alpha-L-glutamate ligase (Coxiella burnetii (strain CbuK_Q154) (Coxiella burnetii (strain Q154))).